Reading from the N-terminus, the 274-residue chain is MKKTAIALLAWFVSSASLAATPWQKITHPVPGAAQSIGSFANGCIIGADTLPVQSDNYQVMRTDQRRYFGHPDLVMFIQRLSHQAQQRGLGTVLIGDMGMPAGGRFNGGHASHQTGLDVDIFLQLPKTRWSQAQLLRPQALDLVSRDGKHVVPSRWSSDIASLIKLAAQDNDVTRIFVNPAIKQQLCLDAGSDRGWLRKVRPWFQHRAHMHVRLRCPADSLECEDQPLPPPGDGCGAELQSWFEPPKPGTTKPEKKTPPPLPPSCQALLDEHVL.

Residues methionine 1–alanine 19 form the signal peptide. 3 cysteine pairs are disulfide-bonded: cysteine 44-cysteine 265, cysteine 187-cysteine 235, and cysteine 216-cysteine 223. The Zn(2+) site is built by histidine 110, histidine 113, aspartate 120, aspartate 147, histidine 150, and histidine 211. The segment at aspartate 225 to leucine 274 is disordered.

This sequence belongs to the peptidase M74 family. Dimer. Requires Zn(2+) as cofactor.

The protein localises to the periplasm. In terms of biological role, murein endopeptidase that cleaves the D-alanyl-meso-2,6-diamino-pimelyl amide bond that connects peptidoglycan strands. Likely plays a role in the removal of murein from the sacculus. This Salmonella heidelberg (strain SL476) protein is Penicillin-insensitive murein endopeptidase.